We begin with the raw amino-acid sequence, 428 residues long: Enolase (428 aa).

Glutamine 173 lines the (2R)-2-phosphoglycerate pocket. The Proton donor role is filled by glutamate 217. Residues aspartate 253, glutamate 294, and aspartate 320 each coordinate Mg(2+). (2R)-2-phosphoglycerate is bound by residues lysine 345, arginine 374, serine 375, and lysine 396. Lysine 345 (proton acceptor) is an active-site residue.

It belongs to the enolase family. It depends on Mg(2+) as a cofactor.

It is found in the cytoplasm. The protein localises to the secreted. Its subcellular location is the cell surface. It carries out the reaction (2R)-2-phosphoglycerate = phosphoenolpyruvate + H2O. Its pathway is carbohydrate degradation; glycolysis; pyruvate from D-glyceraldehyde 3-phosphate: step 4/5. Functionally, catalyzes the reversible conversion of 2-phosphoglycerate (2-PG) into phosphoenolpyruvate (PEP). It is essential for the degradation of carbohydrates via glycolysis. The sequence is that of Enolase from Methanosarcina barkeri (strain Fusaro / DSM 804).